A 76-amino-acid polypeptide reads, in one-letter code: Kappa-scoloptoxin(15)-Ssd3a (76 aa).

Residues 1 to 23 (MEGKIIFICFLVVLLTLPELISS) form the signal peptide.

Post-translationally, contains 2 disulfide bonds. In terms of tissue distribution, expressed by the venom gland.

It is found in the secreted. In terms of biological role, acts as a voltage-gated potassium channel inhibitor. The polypeptide is Kappa-scoloptoxin(15)-Ssd3a (Scolopendra dehaani (Thai centipede)).